Consider the following 333-residue polypeptide: Anthranilate phosphoribosyltransferase (333 aa).

Residues Gly81, 84–85 (GD), Thr89, 91–94 (NIST), 109–117 (KHGNRSVSS), and Ala121 each bind 5-phospho-alpha-D-ribose 1-diphosphate. Gly81 contributes to the anthranilate binding site. A Mg(2+)-binding site is contributed by Ser93. Asn112 contributes to the anthranilate binding site. Arg167 contacts anthranilate. Residues Asp225 and Glu226 each contribute to the Mg(2+) site.

The protein belongs to the anthranilate phosphoribosyltransferase family. Homodimer. Mg(2+) is required as a cofactor.

It catalyses the reaction N-(5-phospho-beta-D-ribosyl)anthranilate + diphosphate = 5-phospho-alpha-D-ribose 1-diphosphate + anthranilate. Its pathway is amino-acid biosynthesis; L-tryptophan biosynthesis; L-tryptophan from chorismate: step 2/5. Catalyzes the transfer of the phosphoribosyl group of 5-phosphorylribose-1-pyrophosphate (PRPP) to anthranilate to yield N-(5'-phosphoribosyl)-anthranilate (PRA). The chain is Anthranilate phosphoribosyltransferase from Haemophilus influenzae (strain PittGG).